A 521-amino-acid polypeptide reads, in one-letter code: Probable protein phosphatase 2C 16 (521 aa).

In terms of domain architecture, PPM-type phosphatase spans 21–327 (KYVVSSMQGW…ENTTVILVQF (307 aa)). D57, G58, Q276, and E318 together coordinate Mn(2+). The disordered stretch occupies residues 354–431 (AAPAGASDTS…ADADDGAPKP (78 aa)).

Belongs to the PP2C family. The cofactor is Mg(2+). Mn(2+) serves as cofactor.

The catalysed reaction is O-phospho-L-seryl-[protein] + H2O = L-seryl-[protein] + phosphate. It carries out the reaction O-phospho-L-threonyl-[protein] + H2O = L-threonyl-[protein] + phosphate. The protein is Probable protein phosphatase 2C 16 of Oryza sativa subsp. japonica (Rice).